Reading from the N-terminus, the 554-residue chain is DM7 family protein GG17593 (554 aa).

The protein belongs to the DM7 family.

This chain is DM7 family protein GG17593, found in Drosophila erecta (Fruit fly).